Reading from the N-terminus, the 514-residue chain is 2'-5'-oligoadenylate synthase-like protein (514 aa).

N-acetylalanine is present on A2. 2 Ubiquitin-like domains span residues 354–433 (IHLT…IPSE) and 434–509 (IQVF…KGEA).

Belongs to the 2-5A synthase family. In terms of assembly, specifically interacts with the ligand binding domain of the thyroid receptor (TR). TRIP14 does not require the presence of thyroid hormone for its interaction. Binds MBD1. Expressed in most tissues, with the highest levels in primary blood Leukocytes and other hematopoietic system tissues, colon, stomach and to some extent in testis.

Its subcellular location is the nucleus. The protein localises to the nucleolus. The protein resides in the cytoplasm. Does not have 2'-5'-OAS activity, but can bind double-stranded RNA. Displays antiviral activity against encephalomyocarditis virus (EMCV) and hepatitis C virus (HCV) via an alternative antiviral pathway independent of RNase L. The sequence is that of 2'-5'-oligoadenylate synthase-like protein (OASL) from Homo sapiens (Human).